The following is a 142-amino-acid chain: Large ribosomal subunit protein bL17 (142 aa).

The protein belongs to the bacterial ribosomal protein bL17 family. Part of the 50S ribosomal subunit. Contacts protein L32.

In Chlamydia muridarum (strain MoPn / Nigg), this protein is Large ribosomal subunit protein bL17.